A 185-amino-acid polypeptide reads, in one-letter code: Ribosome-recycling factor (185 aa).

Belongs to the RRF family.

It is found in the cytoplasm. Responsible for the release of ribosomes from messenger RNA at the termination of protein biosynthesis. May increase the efficiency of translation by recycling ribosomes from one round of translation to another. The chain is Ribosome-recycling factor from Clostridium novyi (strain NT).